Consider the following 163-residue polypeptide: Lipoprotein signal peptidase (163 aa).

A run of 3 helical transmembrane segments spans residues 3–23 (IPLIYNRILILFFFIANIIIL), 70–90 (NYILCLISSIAILIILKTMYN), and 94–114 (IENFFYNIPSAFIISGAIGNF). Residues Asp-125 and Asp-143 contribute to the active site. A helical transmembrane segment spans residues 134-154 (WHFATFNIADVSIFIGSVLFI).

This sequence belongs to the peptidase A8 family.

The protein resides in the cell membrane. It catalyses the reaction Release of signal peptides from bacterial membrane prolipoproteins. Hydrolyzes -Xaa-Yaa-Zaa-|-(S,diacylglyceryl)Cys-, in which Xaa is hydrophobic (preferably Leu), and Yaa (Ala or Ser) and Zaa (Gly or Ala) have small, neutral side chains.. It participates in protein modification; lipoprotein biosynthesis (signal peptide cleavage). Functionally, this protein specifically catalyzes the removal of signal peptides from prolipoproteins. The chain is Lipoprotein signal peptidase from Buchnera aphidicola subsp. Baizongia pistaciae (strain Bp).